A 450-amino-acid chain; its full sequence is UDP-N-acetylmuramoylalanine--D-glutamate ligase (450 aa).

115-121 (GTNGKTT) provides a ligand contact to ATP.

This sequence belongs to the MurCDEF family.

It localises to the cytoplasm. It catalyses the reaction UDP-N-acetyl-alpha-D-muramoyl-L-alanine + D-glutamate + ATP = UDP-N-acetyl-alpha-D-muramoyl-L-alanyl-D-glutamate + ADP + phosphate + H(+). It functions in the pathway cell wall biogenesis; peptidoglycan biosynthesis. In terms of biological role, cell wall formation. Catalyzes the addition of glutamate to the nucleotide precursor UDP-N-acetylmuramoyl-L-alanine (UMA). This is UDP-N-acetylmuramoylalanine--D-glutamate ligase from Desulfatibacillum aliphaticivorans.